Consider the following 56-residue polypeptide: Large ribosomal subunit protein bL33c (56 aa).

The protein belongs to the bacterial ribosomal protein bL33 family.

It is found in the plastid. Its subcellular location is the chloroplast. This Rhodomonas salina (Cryptomonas salina) protein is Large ribosomal subunit protein bL33c.